The primary structure comprises 450 residues: Phosphoglucosamine mutase (450 aa).

Ser102 (phosphoserine intermediate) is an active-site residue. Mg(2+)-binding residues include Ser102, Asp244, Asp246, and Asp248. A Phosphoserine modification is found at Ser102.

Belongs to the phosphohexose mutase family. Requires Mg(2+) as cofactor. Post-translationally, activated by phosphorylation.

It carries out the reaction alpha-D-glucosamine 1-phosphate = D-glucosamine 6-phosphate. Catalyzes the conversion of glucosamine-6-phosphate to glucosamine-1-phosphate. The sequence is that of Phosphoglucosamine mutase from Bartonella bacilliformis (strain ATCC 35685 / KC583 / Herrer 020/F12,63).